A 160-amino-acid chain; its full sequence is Small ribosomal subunit protein uS9 (160 aa).

Belongs to the universal ribosomal protein uS9 family.

This chain is Small ribosomal subunit protein uS9, found in Rhodopseudomonas palustris (strain ATCC BAA-98 / CGA009).